The following is a 478-amino-acid chain: MVSKTQKADLGPQLPEKKKKKKKKKRVVANVSEPETQYSVLNSNDYFIDASPPRATSPSNNVDEVQIPEISLSKRKKKKKSCSTHLEECLGAEPTRARQKKSPSPRRQALEQSAEGLIREKKKKRRKSLSKAASQGSGLKTSPDPKHAKEVSKAGRKSKKQRKEKKVPDTEALPPQDAWLYEAGDSLHSCLEGAEAEEQAALGQKRKQGSPRDHNMKKKKKTHQEGDILLVNSRVSVENSLKKGSKKSVKSEALEFVPIDSPKAPGKKKVKSKKKVEQPVGEGLAVKRKKKKKKRKENGVKEDPWQEEKEESDTDLEVVLEKKGNMDETCIDQVRRKALQEEIDRESGKTEASEPKKWTVGLSVKTEASEPKKWTGTQFGQWDTAGFENEEQKLKFLKLMGGFKHLSPSFSRPPSMTIRSNMALDKKSSEMLQQSLQQDYDRAMSWKYSHGAGLGFNSEARKVFYIDRNASKSIKLQD.

Residues 1–231 are disordered; it reads MVSKTQKADL…THQEGDILLV (231 aa). A Glycyl lysine isopeptide (Lys-Gly) (interchain with G-Cter in SUMO2) cross-link involves residue K7. Basic residues predominate over residues 17-27; that stretch reads KKKKKKKKKRV. Over residues 33 to 45 the composition is skewed to polar residues; it reads EPETQYSVLNSND. Phosphoserine occurs at positions 51 and 59. The span at 54 to 63 shows a compositional bias: polar residues; sequence RATSPSNNVD. 2 stretches are compositionally biased toward basic residues: residues 73–82 and 120–129; these read SKRKKKKKSC and EKKKKRRKSL. A Glycyl lysine isopeptide (Lys-Gly) (interchain with G-Cter in SUMO2) cross-link involves residue K140. Residue S142 is modified to Phosphoserine. The span at 143–153 shows a compositional bias: basic and acidic residues; the sequence is PDPKHAKEVSK. 2 stretches are compositionally biased toward basic residues: residues 154 to 165 and 204 to 222; these read AGRKSKKQRKEK and QKRK…KKKT. K250 is covalently cross-linked (Glycyl lysine isopeptide (Lys-Gly) (interchain with G-Cter in SUMO1); alternate). K250 is covalently cross-linked (Glycyl lysine isopeptide (Lys-Gly) (interchain with G-Cter in SUMO2); alternate). Residues 258–314 are disordered; sequence PIDSPKAPGKKKVKSKKKVEQPVGEGLAVKRKKKKKKRKENGVKEDPWQEEKEESDT. Residue S261 is modified to Phosphoserine. Positions 265-274 are enriched in basic residues; the sequence is PGKKKVKSKK. Glycyl lysine isopeptide (Lys-Gly) (interchain with G-Cter in SUMO2) cross-links involve residues K275 and K287. Basic residues predominate over residues 286–296; that stretch reads VKRKKKKKKRK. Basic and acidic residues predominate over residues 297 to 307; sequence ENGVKEDPWQE. K309 is covalently cross-linked (Glycyl lysine isopeptide (Lys-Gly) (interchain with G-Cter in SUMO2)). An interaction with ZNF106 region spans residues 310 to 478; the sequence is EESDTDLEVV…NASKSIKLQD (169 aa). S312 carries the post-translational modification Phosphoserine. T314 is subject to Phosphothreonine. Residue K323 forms a Glycyl lysine isopeptide (Lys-Gly) (interchain with G-Cter in SUMO2) linkage. Basic and acidic residues predominate over residues 340–357; it reads QEEIDRESGKTEASEPKK. Positions 340-378 are disordered; that stretch reads QEEIDRESGKTEASEPKKWTVGLSVKTEASEPKKWTGTQ. Glycyl lysine isopeptide (Lys-Gly) (interchain with G-Cter in SUMO2) cross-links involve residues K373, K393, K395, K427, and K462.

In terms of assembly, interacts with ZNF106. Expressed in testis.

The protein localises to the nucleus. Its subcellular location is the nucleolus. This Mus musculus (Mouse) protein is Lysine-rich nucleolar protein 1 (Knop1).